The primary structure comprises 1047 residues: Isoleucine--tRNA ligase (1047 aa).

The short motif at 52–62 (PTANGMPGAHH) is the 'HIGH' region element. The short motif at 600 to 604 (KMSKH) is the 'KMSKS' region element. ATP is bound at residue K603.

Belongs to the class-I aminoacyl-tRNA synthetase family. IleS type 2 subfamily. As to quaternary structure, monomer. Zn(2+) is required as a cofactor.

It is found in the cytoplasm. The catalysed reaction is tRNA(Ile) + L-isoleucine + ATP = L-isoleucyl-tRNA(Ile) + AMP + diphosphate. Its function is as follows. Catalyzes the attachment of isoleucine to tRNA(Ile). As IleRS can inadvertently accommodate and process structurally similar amino acids such as valine, to avoid such errors it has two additional distinct tRNA(Ile)-dependent editing activities. One activity is designated as 'pretransfer' editing and involves the hydrolysis of activated Val-AMP. The other activity is designated 'posttransfer' editing and involves deacylation of mischarged Val-tRNA(Ile). The sequence is that of Isoleucine--tRNA ligase from Streptomyces coelicolor (strain ATCC BAA-471 / A3(2) / M145).